Here is an 868-residue protein sequence, read N- to C-terminus: Probable inorganic carbon transporter subunit DabA (868 aa).

4 residues coordinate Zn(2+): C392, D394, H574, and C589.

It belongs to the inorganic carbon transporter (TC 9.A.2) DabA family. In terms of assembly, forms a complex with DabB. Requires Zn(2+) as cofactor.

The protein localises to the cell membrane. Functionally, part of an energy-coupled inorganic carbon pump. The chain is Probable inorganic carbon transporter subunit DabA from Bacillus cereus (strain B4264).